The following is a 491-amino-acid chain: Pentatricopeptide repeat-containing protein At5g27460 (491 aa).

10 PPR repeats span residues 69–99, 105–139, 142–176, 177–211, 212–246, 248–278, 283–313, 318–348, 353–387, and 388–426; these read SLSELRLISKRLIRSNRYDLALQMMEWMENQ, SVYDIALRLDLIIKTHGLKQGEEYFEKLLHSSVSM, AKSAYLPLLRAYVKNKMVKEAEALMEKLNGLGFLV, TPHPFNEMMKLYEASGQYEKVVMVVSMMKGNKIPR, NVLSYNLWMNACCEVSGVAAVETVYKEMVGDKSVE, GWSSLCTLANVYIKSGFDEKARLVLEDAEKM, NRLGYFFLITLYASLGNKEGVVRLWEVSKSV, SCVNYICVLSSLVKTGDLEEAERVFSEWEAQ, DVRVSNVLLGAYVRNGEIRKAESLHGCVLERGGTP, and NYKTWEILMEGWVKCENMEKAIDAMHQVFVLMRRCHWRP.

Belongs to the PPR family. P subfamily.

The protein is Pentatricopeptide repeat-containing protein At5g27460 of Arabidopsis thaliana (Mouse-ear cress).